Here is a 275-residue protein sequence, read N- to C-terminus: Large ribosomal subunit protein uL2c (275 aa).

The segment at 225-249 (PVDHPHGGGEGRAPIGRKKPTTPWG) is disordered.

It belongs to the universal ribosomal protein uL2 family. As to quaternary structure, part of the 50S ribosomal subunit.

It is found in the plastid. In Cuscuta reflexa (Southern Asian dodder), this protein is Large ribosomal subunit protein uL2c (rpl2).